Here is a 203-residue protein sequence, read N- to C-terminus: MEAFTRLDAKAAPLPLANIDTDQIIPKQFLKTVERAGLAKGLFYDLRFDEQGREKPNFVLNRPEYKGAGVLVAGDNFGCGSSREHAPWALMDFGIRCVISTSFADIFYGNCFQNGLLPVVLKAEEVQQLMDEARGGNHVVSVDLEAQTVTSPSGAVFRFEIDPQRKDKMLRGLDAIGETLQSQKDIDVYEMKRALAQPWLEGA.

This sequence belongs to the LeuD family. LeuD type 1 subfamily. In terms of assembly, heterodimer of LeuC and LeuD.

It catalyses the reaction (2R,3S)-3-isopropylmalate = (2S)-2-isopropylmalate. The protein operates within amino-acid biosynthesis; L-leucine biosynthesis; L-leucine from 3-methyl-2-oxobutanoate: step 2/4. Catalyzes the isomerization between 2-isopropylmalate and 3-isopropylmalate, via the formation of 2-isopropylmaleate. This chain is 3-isopropylmalate dehydratase small subunit, found in Phenylobacterium zucineum (strain HLK1).